Consider the following 171-residue polypeptide: Phosphopantetheine adenylyltransferase (171 aa).

Thr-9 is a substrate binding site. ATP is bound by residues 9–10 (TF) and His-17. 3 residues coordinate substrate: Lys-41, Leu-73, and Arg-87. ATP is bound by residues 88-90 (GLR), Glu-98, and 123-129 (YQFISGT).

The protein belongs to the bacterial CoaD family. In terms of assembly, homohexamer. It depends on Mg(2+) as a cofactor.

It is found in the cytoplasm. It carries out the reaction (R)-4'-phosphopantetheine + ATP + H(+) = 3'-dephospho-CoA + diphosphate. The protein operates within cofactor biosynthesis; coenzyme A biosynthesis; CoA from (R)-pantothenate: step 4/5. In terms of biological role, reversibly transfers an adenylyl group from ATP to 4'-phosphopantetheine, yielding dephospho-CoA (dPCoA) and pyrophosphate. This Paraburkholderia xenovorans (strain LB400) protein is Phosphopantetheine adenylyltransferase.